Reading from the N-terminus, the 332-residue chain is DNA repair and recombination protein RadA (332 aa).

126–133 is an ATP binding site; sequence GEFGSGKT.

It belongs to the eukaryotic RecA-like protein family.

In terms of biological role, involved in DNA repair and in homologous recombination. Binds and assemble on single-stranded DNA to form a nucleoprotein filament. Hydrolyzes ATP in a ssDNA-dependent manner and promotes DNA strand exchange between homologous DNA molecules. The protein is DNA repair and recombination protein RadA of Pyrobaculum calidifontis (strain DSM 21063 / JCM 11548 / VA1).